A 554-amino-acid chain; its full sequence is Dihydroxy-acid dehydratase (554 aa).

Residue aspartate 78 participates in Mg(2+) binding. Cysteine 119 is a [2Fe-2S] cluster binding site. 2 residues coordinate Mg(2+): aspartate 120 and lysine 121. Lysine 121 bears the N6-carboxylysine mark. Residue cysteine 191 coordinates [2Fe-2S] cluster. Position 444 (glutamate 444) interacts with Mg(2+). Serine 470 (proton acceptor) is an active-site residue.

The protein belongs to the IlvD/Edd family. Homodimer. [2Fe-2S] cluster serves as cofactor. The cofactor is Mg(2+).

It carries out the reaction (2R)-2,3-dihydroxy-3-methylbutanoate = 3-methyl-2-oxobutanoate + H2O. The catalysed reaction is (2R,3R)-2,3-dihydroxy-3-methylpentanoate = (S)-3-methyl-2-oxopentanoate + H2O. Its pathway is amino-acid biosynthesis; L-isoleucine biosynthesis; L-isoleucine from 2-oxobutanoate: step 3/4. It functions in the pathway amino-acid biosynthesis; L-valine biosynthesis; L-valine from pyruvate: step 3/4. Functionally, functions in the biosynthesis of branched-chain amino acids. Catalyzes the dehydration of (2R,3R)-2,3-dihydroxy-3-methylpentanoate (2,3-dihydroxy-3-methylvalerate) into 2-oxo-3-methylpentanoate (2-oxo-3-methylvalerate) and of (2R)-2,3-dihydroxy-3-methylbutanoate (2,3-dihydroxyisovalerate) into 2-oxo-3-methylbutanoate (2-oxoisovalerate), the penultimate precursor to L-isoleucine and L-valine, respectively. This chain is Dihydroxy-acid dehydratase, found in Nitratidesulfovibrio vulgaris (strain DP4) (Desulfovibrio vulgaris).